Here is a 187-residue protein sequence, read N- to C-terminus: RNA 2',3'-cyclic phosphodiesterase (187 aa).

His40 acts as the Proton donor in catalysis. 2 short sequence motifs (HXTX) span residues His40–Leu43 and His125–Ile128. Catalysis depends on His125, which acts as the Proton acceptor.

Belongs to the 2H phosphoesterase superfamily. ThpR family.

It carries out the reaction a 3'-end 2',3'-cyclophospho-ribonucleotide-RNA + H2O = a 3'-end 2'-phospho-ribonucleotide-RNA + H(+). Functionally, hydrolyzes RNA 2',3'-cyclic phosphodiester to an RNA 2'-phosphomonoester. This is RNA 2',3'-cyclic phosphodiesterase from Thermotoga maritima (strain ATCC 43589 / DSM 3109 / JCM 10099 / NBRC 100826 / MSB8).